We begin with the raw amino-acid sequence, 218 residues long: Small ribosomal subunit protein uS3 (218 aa).

The KH type-2 domain maps to 38 to 106 (IRTFLKKKLY…KLVVDIKEVK (69 aa)).

Belongs to the universal ribosomal protein uS3 family. Part of the 30S ribosomal subunit. Forms a tight complex with proteins S10 and S14.

Its function is as follows. Binds the lower part of the 30S subunit head. Binds mRNA in the 70S ribosome, positioning it for translation. This chain is Small ribosomal subunit protein uS3, found in Agathobacter rectalis (strain ATCC 33656 / DSM 3377 / JCM 17463 / KCTC 5835 / VPI 0990) (Eubacterium rectale).